The sequence spans 88 residues: Cold-regulated protein BLT14 (88 aa).

This is Cold-regulated protein BLT14 (BLT14) from Hordeum vulgare (Barley).